Consider the following 151-residue polypeptide: Transcriptional regulator MraZ (151 aa).

2 SpoVT-AbrB domains span residues 5–51 (AHEL…PVAE) and 81–124 (AEIL…GREQ).

This sequence belongs to the MraZ family. Forms oligomers.

The protein localises to the cytoplasm. The protein resides in the nucleoid. The chain is Transcriptional regulator MraZ from Neisseria gonorrhoeae (strain ATCC 700825 / FA 1090).